The primary structure comprises 61 residues: Large ribosomal subunit protein uL30 (61 aa).

The protein belongs to the universal ribosomal protein uL30 family. In terms of assembly, part of the 50S ribosomal subunit.

This is Large ribosomal subunit protein uL30 from Treponema pallidum subsp. pallidum (strain SS14).